A 208-amino-acid polypeptide reads, in one-letter code: Sec-independent protein translocase protein TatB (208 aa).

A helical membrane pass occupies residues 1 to 21; that stretch reads MFDIGVGELTLIAVVALVVLG. Low complexity predominate over residues 178-189; the sequence is APEPVAVAPVDA. The interval 178-208 is disordered; the sequence is APEPVAVAPVDAGTPAAWTPSAPAKLQEKQP.

It belongs to the TatB family. As to quaternary structure, the Tat system comprises two distinct complexes: a TatABC complex, containing multiple copies of TatA, TatB and TatC subunits, and a separate TatA complex, containing only TatA subunits. Substrates initially bind to the TatABC complex, which probably triggers association of the separate TatA complex to form the active translocon.

It is found in the cell inner membrane. Functionally, part of the twin-arginine translocation (Tat) system that transports large folded proteins containing a characteristic twin-arginine motif in their signal peptide across membranes. Together with TatC, TatB is part of a receptor directly interacting with Tat signal peptides. TatB may form an oligomeric binding site that transiently accommodates folded Tat precursor proteins before their translocation. In Xanthomonas euvesicatoria pv. vesicatoria (strain 85-10) (Xanthomonas campestris pv. vesicatoria), this protein is Sec-independent protein translocase protein TatB.